The primary structure comprises 500 residues: ATP synthase subunit alpha, sodium ion specific (500 aa).

Residue 169 to 176 participates in ATP binding; it reads GDRQTGKT.

Belongs to the ATPase alpha/beta chains family. As to quaternary structure, F-type ATPases have 2 components, CF(1) - the catalytic core - and CF(0) - the membrane proton channel. CF(1) has five subunits: alpha(3), beta(3), gamma(1), delta(1), epsilon(1). CF(0) has three main subunits: a, b and c.

Its subcellular location is the cell membrane. It catalyses the reaction 4 Na(+)(in) + ATP + H2O = 4 Na(+)(out) + ADP + phosphate + H(+). Produces ATP from ADP in the presence of a sodium ion gradient across the membrane. The alpha chain is a regulatory subunit. The sequence is that of ATP synthase subunit alpha, sodium ion specific from Propionigenium modestum.